The sequence spans 175 residues: Gamma-crystallin-1 (175 aa).

Beta/gamma crystallin 'Greek key' domains follow at residues 2–40 and 41–83; these read GKIFFYEERNFQGRHYECGSDYSDLSSYFNRCNSIRVEG and GNWI…RFLP. The connecting peptide stretch occupies residues 84–88; sequence NYQGQ. Beta/gamma crystallin 'Greek key' domains lie at 89-129 and 130-172; these read YKMR…NVFD and GHWM…RRVY.

Belongs to the beta/gamma-crystallin family. As to quaternary structure, monomer.

Functionally, crystallins are the dominant structural components of the vertebrate eye lens. The sequence is that of Gamma-crystallin-1 (cryg1) from Xenopus laevis (African clawed frog).